Here is a 710-residue protein sequence, read N- to C-terminus: F-box/WD repeat-containing protein 7 (710 aa).

The disordered stretch occupies residues 1–158 (MNQELLSVGS…CSSVSDLPAH (158 aa)). At serine 26 the chain carries Phosphoserine. Positions 46–55 (RHQEEEHTAR) are enriched in basic and acidic residues. Polar residues predominate over residues 69 to 84 (QNDTQQGQVEENNNRF). Over residues 87-132 (VDEDSSGNQEEQEEDEEHAGEQEEEEEEEEEEEEMDQESDDFDPSD) the composition is skewed to acidic residues. Residues 133–142 (DSSREDEHTH) are compositionally biased toward basic and acidic residues. The span at 143–158 (NSNVTNCSSVSDLPAH) shows a compositional bias: polar residues. Threonine 208 bears the Phosphothreonine mark. A Phosphoserine; by SGK1 modification is found at serine 230. The 47-residue stretch at 281–327 (RDFISLLPKELALYVLSFLEPKDLLQAAQTCRYWRILAEDNLLWREK) folds into the F-box domain. 7 WD repeats span residues 381-421 (GHDD…RTLV), 423-459 (HTGG…CIHT), 462-501 (GHTS…HVLM), 503-539 (HVAA…CLHT), 542-581 (GHTN…HTLT), 583-621 (HQSL…QTLQ), and 625-662 (KHQS…FIRN).

Homodimer; homodimerization plays a role in substrate binding and/or ubiquitination and degradation. Component of the SCF(FBXW7) complex consisting of CUL1, RBX1, SKP1 and FBXW7. Interacts (via F-box domain) with SKP1. Interacts (via F-box domain) with pseudophosphatase STYX; the interaction is direct and prevents FBXW7 interaction with SKP1. Interacts with cyclin-E (CCNE1 or CCNE2). Interacts with PSEN1. Forms a trimeric complex with NOTCH1 and SGK1. Interacts with NOTCH1 intracellular domain/NICD and NOTCH4 intracellular domain/NICD. Interacts with NOTCH2 intracellular domain (N2ICD). Interacts with MYC (when phosphorylated). Interacts with USP28, counteracting ubiquitination of MYC. Interacts (when phosphorylated at Thr-208) with PIN1, disrupting FBXW7 dimerization and promoting FBXW7 autoubiquitination and degradation. Interacts with UBE2QL1. Interacts with FAM83D; promotes FBXW7 degradation. Interacts with MYCN; FBXW7 competes with AURKA for binding to unphosphorylated MYCN but not for binding to phosphorylated MYCN. Interacts with JUN. Found in a complex with JUN and PRR7. Interacts with JUN and PRR7; the interaction inhibits ubiquitination-mediated JUN degradation, promoting its phosphorylation and transcriptional activity. Interacts with NFE2L1. Interacts with NR1D1. Interacts with RICTOR; mediates RICTOR ubiquitination and degradation. Interacts with USP38, counteracting ubiquitination of MYC. In terms of processing, phosphorylation at Thr-208 promotes interaction with PIN1, leading to disrupt FBXW7 dimerization and promoting FBXW7 autoubiquitination and degradation. Phosphorylated by ATM at Ser-26 in response to DNA damage, promoting recruitment to DNA damage sites and 'Lys-63'-linked ubiquitination of phosphorylated XRCC4. Ubiquitinated: autoubiquitinates following phosphorylation at Thr-208 and subsequent interaction with PIN1. Ubiquitination leads to its proteasomal degradation. In terms of tissue distribution, widely expressed with highest levels in brain, heart and testis.

Its subcellular location is the nucleus. It is found in the nucleoplasm. The protein resides in the chromosome. The protein operates within protein modification; protein ubiquitination. Functionally, substrate recognition component of a SCF (SKP1-CUL1-F-box protein) E3 ubiquitin-protein ligase complex which mediates the ubiquitination and subsequent proteasomal degradation of target proteins. Recognizes and binds phosphorylated sites/phosphodegrons within target proteins and thereafter brings them to the SCF complex for ubiquitination. Mediates ubiquitination and subsequent degradation of CCNE1 and MYC. Identified substrates include cyclin-E (CCNE1 or CCNE2), DISC1, JUN, MYC, NOTCH1 released notch intracellular domain (NICD), NOTCH2, MCL1, MLST8, RICTOR and probably PSEN1. Acts as a negative regulator of JNK signaling by binding to phosphorylated JUN and promoting its ubiquitination and subsequent degradation. SCF(FBXW7) complex mediates the ubiquitination and subsequent degradation of NFE2L1. Involved in bone homeostasis and negative regulation of osteoclast differentiation. Regulates the amplitude of the cyclic expression of hepatic core clock genes and genes involved in lipid and glucose metabolism via ubiquitination and proteasomal degradation of their transcriptional repressor NR1D1; CDK1-dependent phosphorylation of NR1D1 is necessary for SCF(FBXW7)-mediated ubiquitination. Also able to promote 'Lys-63'-linked ubiquitination in response to DNA damage. The SCF(FBXW7) complex facilitates double-strand break repair following phosphorylation by ATM: phosphorylation promotes localization to sites of double-strand breaks and 'Lys-63'-linked ubiquitination of phosphorylated XRCC4, enhancing DNA non-homologous end joining. This Mus musculus (Mouse) protein is F-box/WD repeat-containing protein 7.